Here is a 778-residue protein sequence, read N- to C-terminus: uncharacterized protein (778 aa).

The 92-residue stretch at 1–92 folds into the PE domain; sequence MSFVIAVPEA…GARSYVVAEA (92 aa). Disordered regions lie at residues 125-163, 372-510, and 718-778; these read ADGT…AGLI, TGLA…GDAF, and QGGL…GADG. Gly residues-rich tracts occupy residues 402–429, 436–510, and 718–763; these read NQTG…GGLG, DGTG…GDAF, and QGGL…GSSG.

The protein belongs to the mycobacterial PE family. PGRS subfamily.

This is an uncharacterized protein from Mycobacterium bovis (strain ATCC BAA-935 / AF2122/97).